We begin with the raw amino-acid sequence, 148 residues long: SsrA-binding protein (148 aa).

The tract at residues 128–148 (ESIAKKDQERNLKREFKNNNR) is disordered.

It belongs to the SmpB family.

Its subcellular location is the cytoplasm. Its function is as follows. Required for rescue of stalled ribosomes mediated by trans-translation. Binds to transfer-messenger RNA (tmRNA), required for stable association of tmRNA with ribosomes. tmRNA and SmpB together mimic tRNA shape, replacing the anticodon stem-loop with SmpB. tmRNA is encoded by the ssrA gene; the 2 termini fold to resemble tRNA(Ala) and it encodes a 'tag peptide', a short internal open reading frame. During trans-translation Ala-aminoacylated tmRNA acts like a tRNA, entering the A-site of stalled ribosomes, displacing the stalled mRNA. The ribosome then switches to translate the ORF on the tmRNA; the nascent peptide is terminated with the 'tag peptide' encoded by the tmRNA and targeted for degradation. The ribosome is freed to recommence translation, which seems to be the essential function of trans-translation. In Fusobacterium nucleatum subsp. nucleatum (strain ATCC 25586 / DSM 15643 / BCRC 10681 / CIP 101130 / JCM 8532 / KCTC 2640 / LMG 13131 / VPI 4355), this protein is SsrA-binding protein.